Reading from the N-terminus, the 518-residue chain is Probable triacylglyceride transporter BCG_1471c (518 aa).

14 helical membrane-spanning segments follow: residues 7-27, 46-66, 76-96, 110-130, 144-164, 170-190, 201-221, 230-250, 270-290, 308-328, 337-357, 379-401, 408-428, and 475-495; these read VAIS…YVVV, RITW…PLLG, LMLQ…ALAG, IQGV…ADLW, AAQE…VWLL, VFWI…FSLP, VDLV…IGLY, VLPD…VAFF, PFLS…VTLV, AGML…GGWI, VAFA…HWPV, LVVA…LRVV, IASA…VAAL, and IFTI…LISG.

It belongs to the major facilitator superfamily.

The protein resides in the cell inner membrane. Inhibited by CCCP and valinomycin. In terms of biological role, in association with lipoprotein LprG probably transports triacylglycerides (TAG) across the inner cell membrane into the periplasm; TAG probably regulates lipid metabolism and growth regulation. Confers resistance to several drugs such as rifampicin, clofazimine and novobiocin; is also part of the oxidative stress response and is needed to maintain normal growth characteristics. Probably an efflux transporter, involved in maintaining correct cell wall permeability. Probably required with LprG for normal surface localization of lipoarabinomannan (LAM). Required for optimal growth on cholesterol. The sequence is that of Probable triacylglyceride transporter BCG_1471c from Mycobacterium bovis (strain BCG / Pasteur 1173P2).